The sequence spans 287 residues: NADH-cytochrome b5 reductase 1 (287 aa).

A helical transmembrane segment spans residues 5-25; the sequence is FEALVTALVLAVSFIFIYGKF. Positions 41-145 constitute an FAD-binding FR-type domain; it reads KDWQEFSLLT…RGPKGFYHYE (105 aa). Residues 125-142 and 151-183 contribute to the FAD site; these read AELAIGDRIKVRGPKGFY and EIGMIAGGTGISPMYQIIRAIFSNPRDKTRVCL.

It belongs to the flavoprotein pyridine nucleotide cytochrome reductase family. As to quaternary structure, monomer. Component of the 2-(3-amino-3-carboxypropyl)histidine synthase complex composed of DPH1, DPH2, DPH3 and a NADH-dependent reductase, predominantly CBR1. The cofactor is FAD.

Its subcellular location is the mitochondrion outer membrane. The catalysed reaction is 2 Fe(III)-[cytochrome b5] + NADH = 2 Fe(II)-[cytochrome b5] + NAD(+) + H(+). It catalyses the reaction 2 Fe(3+)-[Dph3] + NADH = 2 Fe(2+)-[Dph3] + NAD(+) + H(+). Its pathway is protein modification; peptidyl-diphthamide biosynthesis. In terms of biological role, NADH-dependent reductase for DPH3 and cytochrome b5. Required for the first step of diphthamide biosynthesis, a post-translational modification of histidine which occurs in elongation factor 2. DPH1 and DPH2 transfer a 3-amino-3-carboxypropyl (ACP) group from S-adenosyl-L-methionine (SAM) to a histidine residue, the reaction is assisted by a reduction system comprising DPH3 and a NADH-dependent reductase, predominantly CBR1. By reducing DPH3, also involved in the formation of the tRNA wobble base modification mcm5s 2U (5-methoxycarbonylmethyl-2-thiouridine), mediated by the elongator complex. The cytochrome b5/NADH cytochrome b5 reductase electron transfer system supports the catalytic activity of several sterol biosynthetic enzymes. This Eremothecium gossypii (strain ATCC 10895 / CBS 109.51 / FGSC 9923 / NRRL Y-1056) (Yeast) protein is NADH-cytochrome b5 reductase 1 (CBR1).